The primary structure comprises 356 residues: Uroporphyrinogen decarboxylase (356 aa).

Residues Arg33, Ala35, Arg37, Arg46, Asp82, Tyr159, Ser214, and His334 each contribute to the coproporphyrinogen I site. Arg33, Ala35, and Arg37 together coordinate coproporphyrinogen III. Positions 82, 159, 214, and 334 each coordinate coproporphyrinogen III.

It belongs to the uroporphyrinogen decarboxylase family. As to quaternary structure, homodimer.

The protein resides in the cytoplasm. It is found in the cytosol. It catalyses the reaction uroporphyrinogen III + 4 H(+) = coproporphyrinogen III + 4 CO2. The protein operates within porphyrin-containing compound metabolism; protoporphyrin-IX biosynthesis; coproporphyrinogen-III from 5-aminolevulinate: step 4/4. Catalyzes the decarboxylation of four acetate groups of uroporphyrinogen-III to yield coproporphyrinogen-III. In Drosophila melanogaster (Fruit fly), this protein is Uroporphyrinogen decarboxylase.